Reading from the N-terminus, the 134-residue chain is uncharacterized protein (134 aa).

The disordered stretch occupies residues 59 to 92 (VSKPKRRSPHPHGNKAADKRKTTEKEPERKKRVG). Residues 61–71 (KPKRRSPHPHG) show a composition bias toward basic residues. Over residues 73–87 (KAADKRKTTEKEPER) the composition is skewed to basic and acidic residues.

This is an uncharacterized protein from Saccharomyces cerevisiae (strain ATCC 204508 / S288c) (Baker's yeast).